The primary structure comprises 245 residues: tRNA1(Val) (adenine(37)-N6)-methyltransferase (245 aa).

The protein belongs to the methyltransferase superfamily. tRNA (adenine-N(6)-)-methyltransferase family.

It is found in the cytoplasm. The catalysed reaction is adenosine(37) in tRNA1(Val) + S-adenosyl-L-methionine = N(6)-methyladenosine(37) in tRNA1(Val) + S-adenosyl-L-homocysteine + H(+). Its function is as follows. Specifically methylates the adenine in position 37 of tRNA(1)(Val) (anticodon cmo5UAC). This Shigella boydii serotype 18 (strain CDC 3083-94 / BS512) protein is tRNA1(Val) (adenine(37)-N6)-methyltransferase.